A 343-amino-acid polypeptide reads, in one-letter code: MATRWTLSQAQALFETPFLELMFEAQQIHRHYFDPRQVQVSTLLSIKTGACPEDCKYCPQSARYKTGLEAERLMEVEEVLSSARKAKAAGSGRFCMGAAWKNPHERDMPYLEKMVQGVKEMGMETCMTLGSLSEQQAQRLAHAGLDFYNHNLDTSPEFYGSIITTRSYQERLDTLGKVREAGIKVCSGGIVGLGETVQDRAGLLVQLANLPEPPESVPINMLVKVKGTPMADNDDVDPFDFVRTIAVARIMMPRSHVRLSAGREQMSEQTQAMCFMAGANSIFYGCKLLTTPNPDEDKDLLLFRKLGLNPRHGTTESGDNAQQQALAAQLLSADTEQFYNAAR.

A Radical SAM core domain is found at R36–R254. [4Fe-4S] cluster contacts are provided by C51, C55, and C58. [2Fe-2S] cluster contacts are provided by C95, C126, C186, and R258.

Belongs to the radical SAM superfamily. Biotin synthase family. As to quaternary structure, homodimer. [4Fe-4S] cluster serves as cofactor. [2Fe-2S] cluster is required as a cofactor.

The catalysed reaction is (4R,5S)-dethiobiotin + (sulfur carrier)-SH + 2 reduced [2Fe-2S]-[ferredoxin] + 2 S-adenosyl-L-methionine = (sulfur carrier)-H + biotin + 2 5'-deoxyadenosine + 2 L-methionine + 2 oxidized [2Fe-2S]-[ferredoxin]. Its pathway is cofactor biosynthesis; biotin biosynthesis; biotin from 7,8-diaminononanoate: step 2/2. In terms of biological role, catalyzes the conversion of dethiobiotin (DTB) to biotin by the insertion of a sulfur atom into dethiobiotin via a radical-based mechanism. This chain is Biotin synthase, found in Erwinia tasmaniensis (strain DSM 17950 / CFBP 7177 / CIP 109463 / NCPPB 4357 / Et1/99).